The chain runs to 599 residues: 1-deoxy-D-xylulose-5-phosphate synthase (599 aa).

Residues His63 and Gly104 to Ser106 contribute to the thiamine diphosphate site. Residue Asp135 coordinates Mg(2+). Residues Gly136–Ala137, Asn164, Tyr271, and Glu352 each bind thiamine diphosphate. Residue Asn164 participates in Mg(2+) binding.

The protein belongs to the transketolase family. DXPS subfamily. In terms of assembly, homodimer. Mg(2+) serves as cofactor. Thiamine diphosphate is required as a cofactor.

It carries out the reaction D-glyceraldehyde 3-phosphate + pyruvate + H(+) = 1-deoxy-D-xylulose 5-phosphate + CO2. It participates in metabolic intermediate biosynthesis; 1-deoxy-D-xylulose 5-phosphate biosynthesis; 1-deoxy-D-xylulose 5-phosphate from D-glyceraldehyde 3-phosphate and pyruvate: step 1/1. Functionally, catalyzes the acyloin condensation reaction between C atoms 2 and 3 of pyruvate and glyceraldehyde 3-phosphate to yield 1-deoxy-D-xylulose-5-phosphate (DXP). In Nitratiruptor sp. (strain SB155-2), this protein is 1-deoxy-D-xylulose-5-phosphate synthase.